We begin with the raw amino-acid sequence, 182 residues long: ATP-dependent protease subunit HslV (182 aa).

Residue T10 is part of the active site. Na(+) is bound by residues A166, C169, and S172.

Belongs to the peptidase T1B family. HslV subfamily. In terms of assembly, a double ring-shaped homohexamer of HslV is capped on each side by a ring-shaped HslU homohexamer. The assembly of the HslU/HslV complex is dependent on binding of ATP.

The protein localises to the cytoplasm. It carries out the reaction ATP-dependent cleavage of peptide bonds with broad specificity.. Its activity is regulated as follows. Allosterically activated by HslU binding. Its function is as follows. Protease subunit of a proteasome-like degradation complex believed to be a general protein degrading machinery. This Rickettsia felis (strain ATCC VR-1525 / URRWXCal2) (Rickettsia azadi) protein is ATP-dependent protease subunit HslV.